Reading from the N-terminus, the 434-residue chain is Glutamate-1-semialdehyde 2,1-aminomutase 1 (434 aa).

An N6-(pyridoxal phosphate)lysine modification is found at lysine 270.

Belongs to the class-III pyridoxal-phosphate-dependent aminotransferase family. HemL subfamily. Homodimer. It depends on pyridoxal 5'-phosphate as a cofactor.

It localises to the cytoplasm. It catalyses the reaction (S)-4-amino-5-oxopentanoate = 5-aminolevulinate. It participates in porphyrin-containing compound metabolism; protoporphyrin-IX biosynthesis; 5-aminolevulinate from L-glutamyl-tRNA(Glu): step 2/2. This Bacillus anthracis (strain A0248) protein is Glutamate-1-semialdehyde 2,1-aminomutase 1.